The chain runs to 537 residues: Hexahomomethionine N-hydroxylase (537 aa).

A helical transmembrane segment spans residues 7-27 (FNTCFQILLGFIVFIASITLL).

Belongs to the cytochrome P450 family. Heme is required as a cofactor. As to expression, highly expressed in hypocotyl and roots. Lower expression in siliques, stems and leaves. Barely detectable in flowers. Expressed only in the vascular bundles in apical plant parts.

The protein localises to the endoplasmic reticulum membrane. It catalyses the reaction L-hexahomomethionine + 2 reduced [NADPH--hemoprotein reductase] + 2 O2 = (E)-9-(methylsulfanyl)nonanal oxime + 2 oxidized [NADPH--hemoprotein reductase] + CO2 + 3 H2O + 2 H(+). It carries out the reaction L-pentahomomethionine + 2 reduced [NADPH--hemoprotein reductase] + 2 O2 = (E)-8-(methylsulfanyl)octanal oxime + 2 oxidized [NADPH--hemoprotein reductase] + CO2 + 3 H2O + 2 H(+). The enzyme catalyses an L-polyhomomethionine + 2 reduced [NADPH--hemoprotein reductase] + 2 O2 = an (E)-omega-(methylsulfanyl)-alkanal oxime + 2 oxidized [NADPH--hemoprotein reductase] + CO2 + 3 H2O + 2 H(+). Functionally, catalyzes the conversion of the long chain elongated methionines penta- and hexahomomethionine to their corresponding aldoximes 8-methylthiooctanaldoxime and 9-methylthiononanaldoxime. The chain is Hexahomomethionine N-hydroxylase (CYP79F2) from Arabidopsis thaliana (Mouse-ear cress).